The sequence spans 310 residues: Ribonuclease Z (310 aa).

7 residues coordinate Zn(2+): His-64, His-66, Asp-68, His-69, His-146, Asp-215, and His-273. The Proton acceptor role is filled by Asp-68.

The protein belongs to the RNase Z family. In terms of assembly, homodimer. The cofactor is Zn(2+).

It catalyses the reaction Endonucleolytic cleavage of RNA, removing extra 3' nucleotides from tRNA precursor, generating 3' termini of tRNAs. A 3'-hydroxy group is left at the tRNA terminus and a 5'-phosphoryl group is left at the trailer molecule.. Its function is as follows. Zinc phosphodiesterase, which displays some tRNA 3'-processing endonuclease activity. Probably involved in tRNA maturation, by removing a 3'-trailer from precursor tRNA. The chain is Ribonuclease Z from Aeropyrum pernix (strain ATCC 700893 / DSM 11879 / JCM 9820 / NBRC 100138 / K1).